Consider the following 2199-residue polypeptide: DNA polymerase epsilon catalytic subunit A (2199 aa).

Zn(2+) is bound by residues Cys2069, Cys2072, Cys2104, and Cys2107. The CysA-type zinc-finger motif lies at 2069-2107 (CKQCGVHQDFDLCLHEHLWPTRDDMGTLVFSDGWSCSSC). Positions 2138, 2141, 2153, and 2155 each coordinate [4Fe-4S] cluster. The CysB motif motif lies at 2138–2155 (CSKCKTVKQWSLKERCSC).

This sequence belongs to the DNA polymerase type-B family. Heterotetramer. Consists of 4 subunits: pol2, dpb2, dpb3 and dpb4. Requires [4Fe-4S] cluster as cofactor.

Its subcellular location is the nucleus. The catalysed reaction is DNA(n) + a 2'-deoxyribonucleoside 5'-triphosphate = DNA(n+1) + diphosphate. DNA polymerase II participates in chromosomal DNA replication. This is DNA polymerase epsilon catalytic subunit A (pol2) from Schizosaccharomyces pombe (strain 972 / ATCC 24843) (Fission yeast).